Consider the following 64-residue polypeptide: uncharacterized protein (64 aa).

This is an uncharacterized protein from Dictyostelium discoideum (Social amoeba).